A 279-amino-acid chain; its full sequence is Pantothenate synthetase (279 aa).

ATP is bound at residue 26-33 (MGALHSGH). Catalysis depends on histidine 33, which acts as the Proton donor. Residue glutamine 57 coordinates (R)-pantoate. Glutamine 57 provides a ligand contact to beta-alanine. 147-150 (GQKD) is an ATP binding site. Glutamine 153 contacts (R)-pantoate. ATP-binding positions include isoleucine 176 and 184 to 187 (ESSR).

The protein belongs to the pantothenate synthetase family. As to quaternary structure, homodimer.

It localises to the cytoplasm. The catalysed reaction is (R)-pantoate + beta-alanine + ATP = (R)-pantothenate + AMP + diphosphate + H(+). The protein operates within cofactor biosynthesis; (R)-pantothenate biosynthesis; (R)-pantothenate from (R)-pantoate and beta-alanine: step 1/1. In terms of biological role, catalyzes the condensation of pantoate with beta-alanine in an ATP-dependent reaction via a pantoyl-adenylate intermediate. This chain is Pantothenate synthetase, found in Corynebacterium glutamicum (strain R).